Reading from the N-terminus, the 450-residue chain is Trigger factor (450 aa).

The region spanning 161-246 (GDRVVIDFKG…VKTVEAPEYP (86 aa)) is the PPIase FKBP-type domain. The interval 422–450 (PMSLQELMSPQQPEAESAEGESKQDETKE) is disordered. The span at 441–450 (GESKQDETKE) shows a compositional bias: basic and acidic residues.

Belongs to the FKBP-type PPIase family. Tig subfamily.

Its subcellular location is the cytoplasm. The catalysed reaction is [protein]-peptidylproline (omega=180) = [protein]-peptidylproline (omega=0). Its function is as follows. Involved in protein export. Acts as a chaperone by maintaining the newly synthesized protein in an open conformation. Functions as a peptidyl-prolyl cis-trans isomerase. The chain is Trigger factor from Alkalilimnicola ehrlichii (strain ATCC BAA-1101 / DSM 17681 / MLHE-1).